We begin with the raw amino-acid sequence, 348 residues long: CCAAT/enhancer-binding protein beta (348 aa).

Residues 1-24 are required for Lys-174 sumoylation; the sequence is MQRLVVWDPVCLPLPPPPPAFKSM. R3 carries the asymmetric dimethylarginine; by CARM1 modification. A required for MYC transcriptional repression region spans residues 24-135; it reads MEVANFYYEA…YGGKNCKKAA (112 aa). The residue at position 43 (K43) is an N6-acetyllysine; alternate. K43 carries the N6-methylated lysine; alternate modification. Disordered regions lie at residues 44–65 and 79–112; these read AAPA…ELGS and LEPL…ASSG. Residues 47 to 59 show a composition bias toward pro residues; sequence AAPPADRPGPRPP. The short motif at 116–124 is the 9aaTAD element; sequence DFLSDLFSD. Residues K129 and K132 each carry the N6-acetyllysine; by KAT2A and KAT2B modification. K133 carries the post-translational modification N6-acetyllysine; by KAT2A and KAT2B; alternate. K133 is covalently cross-linked (Glycyl lysine isopeptide (Lys-Gly) (interchain with G-Cter in SUMO2); alternate). Residues 158-178 are disordered; sequence APLHPPPPPPPPPAELKAEPG. A compositionally biased stretch (pro residues) spans 160 to 171; that stretch reads LHPPPPPPPPPA. A Glycyl lysine isopeptide (Lys-Gly) (interchain with G-Cter in SUMO2); alternate cross-link involves residue K174. Residue K174 forms a Glycyl lysine isopeptide (Lys-Gly) (interchain with G-Cter in SUMO); alternate linkage. Residues K185 and K187 each participate in a glycyl lysine isopeptide (Lys-Gly) (interchain with G-Cter in SUMO2) cross-link. Low complexity predominate over residues 219–259; sequence SGSSGSLSTSSSSSPPGTPSPADAKATPAAAACYAGAAPAP. Residues 219 to 277 form a disordered region; that stretch reads SGSSGSLSTSSSSSPPGTPSPADAKATPAAAACYAGAAPAPSQVKSKAKKTVDKHSDEY. Position 227 is a phosphothreonine; by GSK3-beta (T227). O-linked (GlcNAc) serine glycosylation is found at S228 and S229. S232 bears the Phosphoserine; by GSK3-beta mark. T236 carries the post-translational modification Phosphothreonine; by RPS6KA1, CDK2 and MAPK. Glycyl lysine isopeptide (Lys-Gly) (interchain with G-Cter in SUMO2) cross-links involve residues K263 and K265. The segment covering 268-277 has biased composition (basic and acidic residues); that stretch reads KTVDKHSDEY. A Phosphothreonine; by RPS6KA1 and PKC/PRKCA modification is found at T269. The bZIP domain occupies 274 to 337; the sequence is SDEYKIRRER…STLRNLFKTL (64 aa). Residues 278–298 are basic motif; sequence KIRRERNNIAVRKSRDKAKMR. S291 carries the post-translational modification Phosphoserine; by PKC/PRKCA. Residues 300-307 form a leucine-zipper region; the sequence is LETQHKVL. At S328 the chain carries Phosphoserine; by CaMK2. Residue K335 forms a Glycyl lysine isopeptide (Lys-Gly) (interchain with G-Cter in SUMO2) linkage.

The protein belongs to the bZIP family. C/EBP subfamily. Binds DNA as a homodimer and as a heterodimer. Interacts with ATF4. Binds DNA as a heterodimer with ATF4. Interacts with MYB; within the complex, MYB and CEBPB bind to different promoter regions. Can form stable heterodimers with CEBPA, CEBPD and CEBPG. Interacts with SIX1. Interacts with TRIM28 and PTGES2. Interacts with PRDM16. Interacts with CCDC85B. Forms a complex with THOC5. Interacts with ZNF638; this interaction increases transcriptional activation. Interacts with CIDEA and CIDEC; these interactions increase transcriptional activation of a subset of CEBPB downstream target genes. Interacts with DDIT3/CHOP. Interacts with EP300; recruits EP300 to chromatin. Interacts with RORA; the interaction disrupts interaction with EP300. Interacts (not methylated) with MED23, MED26, SMARCA2, SMARCB1 and SMARCC1. Interacts with KAT2A and KAT2B. Interacts with ATF5; EP300 is required for ATF5 and CEBPB interaction and DNA binding. Interacts with NFE2L1; the heterodimer represses expression of DSPP during odontoblast differentiation. In terms of processing, methylated. Methylation at Arg-3 by CARM1 and at Lys-43 by EHMT2 inhibit transactivation activity. Methylation is probably inhibited by phosphorylation at Thr-236. Sumoylated by polymeric chains of SUMO2 or SUMO3. Sumoylation at Lys-174 is required for inhibition of T-cells proliferation. In adipocytes, sumoylation at Lys-174 by PIAS1 leads to ubiquitination and subsequent proteasomal degradation. Desumoylated by SENP2, which abolishes ubiquitination and stabilizes protein levels. Post-translationally, ubiquitinated, leading to proteasomal degradation. In terms of processing, phosphorylated at Thr-236 by MAPK and CDK2, serves to prime phosphorylation at Thr-227 and Ser-232 by GSK3B and acquire DNA-binding as well as transactivation activities, required to induce adipogenesis. MAPK and CDK2 act sequentially to maintain Thr-236 in the primed phosphorylated state during mitotical cloning expansion and thereby progression of terminal differentiation. Phosphorylation at Thr-269 enhances transactivation activity. Phosphorylation at Ser-328 in response to calcium increases transactivation activity. Phosphorylated at Thr-236 by RPS6KA1. O-glycosylated, glycosylation at Ser-228 and Ser-229 prevents phosphorylation on Thr-236, Ser-232 and Thr-227 and DNA binding activity which delays the adipocyte differentiation program. Post-translationally, acetylated. Acetylation at Lys-43 is an important and dynamic regulatory event that contributes to its ability to transactivate target genes, including those associated with adipogenesis and adipocyte function. Deacetylation by HDAC1 represses its transactivation activity. Acetylated by KAT2A and KAT2B within a cluster of lysine residues between amino acids 129-133, this acetylation is strongly induced by glucocorticoid treatment and enhances transactivation activity.

Its subcellular location is the nucleus. It is found in the cytoplasm. In terms of biological role, important transcription factor regulating the expression of genes involved in immune and inflammatory responses. Also plays a significant role in adipogenesis, as well as in the gluconeogenic pathway, liver regeneration, and hematopoiesis. The consensus recognition site is 5'-T[TG]NNGNAA[TG]-3'. Its functional capacity is governed by protein interactions and post-translational protein modifications. During early embryogenesis, plays essential and redundant roles with CEBPA. Has a promitotic effect on many cell types such as hepatocytes and adipocytes but has an antiproliferative effect on T-cells by repressing MYC expression, facilitating differentiation along the T-helper 2 lineage. Binds to regulatory regions of several acute-phase and cytokines genes and plays a role in the regulation of acute-phase reaction and inflammation. Also plays a role in intracellular bacteria killing. During adipogenesis, is rapidly expressed and, after activation by phosphorylation, induces CEBPA and PPARG, which turn on the series of adipocyte genes that give rise to the adipocyte phenotype. The delayed transactivation of the CEBPA and PPARG genes by CEBPB appears necessary to allow mitotic clonal expansion and thereby progression of terminal differentiation. Essential for female reproduction because of a critical role in ovarian follicle development. Restricts osteoclastogenesis: together with NFE2L1; represses expression of DSPP during odontoblast differentiation. The protein is CCAAT/enhancer-binding protein beta (CEBPB) of Bos taurus (Bovine).